A 360-amino-acid polypeptide reads, in one-letter code: Alpha-2-macroglobulin receptor-associated protein (360 aa).

The N-terminal stretch at 1-28 (MAPRRERVSTLPRLQLLVLLLLPLMLVP) is a signal peptide. Phosphoserine is present on residues S53 and S138. Positions 184–302 (EKIQEYNVLL…KHNHYQKQLE (119 aa)) form a coiled coil. The LDL receptor binding stretch occupies residues 240–356 (RLRKVSHQGY…DLSSRVSRAR (117 aa)). An N-linked (GlcNAc...) asparagine glycan is attached at N271. Residues 357–360 (HNEL) carry the Prevents secretion from ER motif.

It belongs to the alpha-2-MRAP family. Interacts with the LRP1/alpha-2-macroglobulin receptor heavy and light chains; the interaction is transient and coincides with a reduction of ligand binding by the receptor. Interacts with LRP2/glycoprotein 330. Interacts with LRP1B; binding is followed by internalization and degradation. Interacts with LDLR. Interacts with SORL1. Interacts with LRP1; this interaction is followed by rapid internalization. In terms of processing, N-glycosylated. As to expression, highly expressed in PYS-2 parietal endoderm cells and in the kidney. The RNA level increased about 10-fold during differentiation of F9 embryonal carcinoma cells to parietal endoderm cells.

Its subcellular location is the rough endoplasmic reticulum lumen. The protein localises to the endoplasmic reticulum-Golgi intermediate compartment lumen. It localises to the golgi apparatus. It is found in the cis-Golgi network. The protein resides in the golgi apparatus lumen. Its subcellular location is the endosome lumen. The protein localises to the cell surface. Its function is as follows. Molecular chaperone for LDL receptor-related proteins that may regulate their ligand binding activity along the secretory pathway. This Mus musculus (Mouse) protein is Alpha-2-macroglobulin receptor-associated protein (Lrpap1).